The chain runs to 318 residues: NADH-ubiquinone oxidoreductase chain 1 (318 aa).

The next 8 membrane-spanning stretches (helical) occupy residues 3–23 (FMNL…LTLL), 69–89 (VLFI…WIPL), 102–122 (ILFM…SGWA), 146–166 (LAII…STLI), 171–191 (HIWL…STLA), 222–242 (LFFL…IILF), 253–273 (ELYT…FLWV), and 294–314 (LPLT…LAGI).

Belongs to the complex I subunit 1 family. In terms of assembly, core subunit of respiratory chain NADH dehydrogenase (Complex I) which is composed of 45 different subunits.

The protein resides in the mitochondrion inner membrane. It catalyses the reaction a ubiquinone + NADH + 5 H(+)(in) = a ubiquinol + NAD(+) + 4 H(+)(out). In terms of biological role, core subunit of the mitochondrial membrane respiratory chain NADH dehydrogenase (Complex I) which catalyzes electron transfer from NADH through the respiratory chain, using ubiquinone as an electron acceptor. Essential for the catalytic activity and assembly of complex I. The sequence is that of NADH-ubiquinone oxidoreductase chain 1 (MT-ND1) from Cnephaeus nilssonii (Northern bat).